A 207-amino-acid chain; its full sequence is Thymidylate kinase (207 aa).

An ATP-binding site is contributed by 7–14; it reads GCEGSGKS.

This sequence belongs to the thymidylate kinase family.

It carries out the reaction dTMP + ATP = dTDP + ADP. Functionally, phosphorylation of dTMP to form dTDP in both de novo and salvage pathways of dTTP synthesis. This is Thymidylate kinase from Chlamydia felis (strain Fe/C-56) (Chlamydophila felis).